The following is a 573-amino-acid chain: Thiol:disulfide interchange protein DsbD (573 aa).

A signal peptide spans 1–20; it reads MLKRFFLLLSSLLLVCNVQA. Over 21–175 the chain is Periplasmic; the sequence is GLFNNKPQYL…AENLSNNYLS (155 aa). Cystine bridges form between Cys-121–Cys-126 and Cys-191–Cys-313. Residues 176–196 form a helical membrane-spanning segment; the sequence is IFGFLLLGIGLAFTPCVLPML. The Cytoplasmic segment spans residues 197-227; that stretch reads PLLSAIVIGHKNRPNTSRALLLSFTYVQGMA. Residues 228–248 traverse the membrane as a helical segment; it reads LTYTLLGLTVAAIGLPFQVAL. Residues 249–251 lie on the Periplasmic side of the membrane; sequence QSP. A helical transmembrane segment spans residues 252–272; that stretch reads AVLISLAVLFTLLAASMFGLF. The Cytoplasmic segment spans residues 273-292; the sequence is EIRLPNTWQQKLNALSQQQQ. The helical transmembrane segment at 293-313 threads the bilayer; the sequence is GGAVGNVFIMGIIAGLVASPC. Over 314–331 the chain is Periplasmic; it reads TSAPLSGALLYVAQSGNL. Residues 332-352 traverse the membrane as a helical segment; sequence LIGGLALYLLALGMGLPLILI. The Cytoplasmic segment spans residues 353–365; it reads TVFGNQILPKSGE. The chain crosses the membrane as a helical span at residues 366–386; sequence WLFKVKTAFGFVMLALPIFLI. The Periplasmic portion of the chain corresponds to 387–393; sequence SRILPSH. A helical membrane pass occupies residues 394–414; the sequence is YEPFLWSTLALAFLGWLISSL. Residues 415 to 425 are Cytoplasmic-facing; that stretch reads NYSTMLKQAVR. The chain crosses the membrane as a helical span at residues 426 to 446; it reads ILLFIAFGLTAYPWANLVWQT. One can recognise a Thioredoxin domain in the interval 440–573; sequence ANLVWQTTSN…NQFLAWLNRL (134 aa). Topologically, residues 447–573 are periplasmic; that stretch reads TSNTAQPTTP…NQFLAWLNRL (127 aa). A disulfide bond links Cys-490 and Cys-493.

The protein belongs to the thioredoxin family. DsbD subfamily.

Its subcellular location is the cell inner membrane. The catalysed reaction is [protein]-dithiol + NAD(+) = [protein]-disulfide + NADH + H(+). It carries out the reaction [protein]-dithiol + NADP(+) = [protein]-disulfide + NADPH + H(+). Functionally, required to facilitate the formation of correct disulfide bonds in some periplasmic proteins and for the assembly of the periplasmic c-type cytochromes. Acts by transferring electrons from cytoplasmic thioredoxin to the periplasm. This transfer involves a cascade of disulfide bond formation and reduction steps. This chain is Thiol:disulfide interchange protein DsbD, found in Haemophilus ducreyi (strain 35000HP / ATCC 700724).